The following is a 313-amino-acid chain: Deoxyribonucleoside regulator (313 aa).

The segment at residues 23–42 (QQQIAEQLNISRPTVSRLLQ) is a DNA-binding region (H-T-H motif).

This sequence belongs to the SorC transcriptional regulatory family. Homooctamer.

Negative regulator of the dra-nupC-pdp operon. DeoR binds cooperatively to the operator DNA, which consists of a palindrome and a direct repeat sequence located 3' to the palindrome. The protein is Deoxyribonucleoside regulator of Bacillus subtilis (strain 168).